The sequence spans 85 residues: Elongation factor 1-beta (85 aa).

It belongs to the EF-1-beta/EF-1-delta family.

Its function is as follows. Promotes the exchange of GDP for GTP in EF-1-alpha/GDP, thus allowing the regeneration of EF-1-alpha/GTP that could then be used to form the ternary complex EF-1-alpha/GTP/AAtRNA. The protein is Elongation factor 1-beta of Methanosphaerula palustris (strain ATCC BAA-1556 / DSM 19958 / E1-9c).